A 390-amino-acid chain; its full sequence is Probable purine permease 18 (390 aa).

Over residues 1–14 (MEMTEASKQTTAEG) the composition is skewed to polar residues. Residues 1 to 23 (MEMTEASKQTTAEGSANPEPDQI) form a disordered region. S25 bears the Phosphoserine mark. A run of 10 helical transmembrane segments spans residues 39–59 (ISVS…MLLL), 81–101 (WLQA…FFIF), 120–140 (LILL…LFAL), 148–168 (GVFT…AAII), 176–196 (WIIL…PEFG), 211–231 (WLTF…QLCF), 250–270 (VIEM…VGLF), 297–317 (IGLA…VLYV), 324–344 (VVHM…FDFM), and 348–368 (FSWP…SYFY).

This sequence belongs to the purine permeases (TC 2.A.7.14) family.

The protein resides in the membrane. The protein is Probable purine permease 18 (PUP18) of Arabidopsis thaliana (Mouse-ear cress).